The primary structure comprises 349 residues: GTPase Obg (349 aa).

An Obg domain is found at 1 to 159 (MKFLDQAKVY…LWIWLRLKLI (159 aa)). Positions 160–327 (ADAGLIGLPN…VLRALMRVVQ (168 aa)) constitute an OBG-type G domain. Residues 166 to 173 (GLPNAGKS), 191 to 195 (FTTLH), 212 to 215 (DIPG), 279 to 282 (SQID), and 308 to 310 (SSA) each bind GTP. Mg(2+) contacts are provided by Ser173 and Thr193.

Belongs to the TRAFAC class OBG-HflX-like GTPase superfamily. OBG GTPase family. In terms of assembly, monomer. Requires Mg(2+) as cofactor.

The protein resides in the cytoplasm. An essential GTPase which binds GTP, GDP and possibly (p)ppGpp with moderate affinity, with high nucleotide exchange rates and a fairly low GTP hydrolysis rate. Plays a role in control of the cell cycle, stress response, ribosome biogenesis and in those bacteria that undergo differentiation, in morphogenesis control. This chain is GTPase Obg, found in Chelativorans sp. (strain BNC1).